The chain runs to 723 residues: Tryptophan 2-monooxygenase (723 aa).

Ser218, Glu238, Arg246, and Arg266 together coordinate FMN. Residue Arg266 participates in substrate binding.

Belongs to the tryptophan 2-monooxygenase family. It depends on FMN as a cofactor.

It catalyses the reaction L-tryptophan + O2 = indole-3-acetamide + CO2 + H2O. The protein operates within plant hormone metabolism; auxin biosynthesis. The protein is Tryptophan 2-monooxygenase (iaaM) of Allorhizobium ampelinum (strain ATCC BAA-846 / DSM 112012 / S4) (Agrobacterium vitis (strain S4)).